We begin with the raw amino-acid sequence, 469 residues long: Putative dipeptidase SAR1836 (469 aa).

His84 is a binding site for Zn(2+). Residue Asp86 is part of the active site. Asp115 provides a ligand contact to Zn(2+). The active-site Proton acceptor is Glu149. Zn(2+) contacts are provided by Glu150, Asp173, and His440.

This sequence belongs to the peptidase M20A family. Zn(2+) serves as cofactor.

The sequence is that of Putative dipeptidase SAR1836 from Staphylococcus aureus (strain MRSA252).